The primary structure comprises 143 residues: Glutamate-rich protein 4 (143 aa).

Residues 90–106 are compositionally biased toward acidic residues; that stretch reads LEEEEEDDDEEEQEEEG. Positions 90 to 143 are disordered; that stretch reads LEEEEEDDDEEEQEEEGEGKNCVEENKGLQGKQGEKCSGNPYPAQRLPDFEMTI. A compositionally biased stretch (basic and acidic residues) spans 107-116; sequence EGKNCVEENK.

In Rattus norvegicus (Rat), this protein is Glutamate-rich protein 4 (Erich4).